The chain runs to 308 residues: Ribonuclease Z (308 aa).

Positions 60, 62, 64, 65, 140, 209, and 269 each coordinate Zn(2+). Asp64 functions as the Proton acceptor in the catalytic mechanism.

This sequence belongs to the RNase Z family. In terms of assembly, homodimer. Zn(2+) is required as a cofactor.

The enzyme catalyses Endonucleolytic cleavage of RNA, removing extra 3' nucleotides from tRNA precursor, generating 3' termini of tRNAs. A 3'-hydroxy group is left at the tRNA terminus and a 5'-phosphoryl group is left at the trailer molecule.. Zinc phosphodiesterase, which displays some tRNA 3'-processing endonuclease activity. Probably involved in tRNA maturation, by removing a 3'-trailer from precursor tRNA. The protein is Ribonuclease Z of Methanococcus maripaludis (strain C6 / ATCC BAA-1332).